The following is a 720-amino-acid chain: Protein unc-112 (720 aa).

Disordered stretches follow at residues 145–170 and 210–236; these read DLRR…ESVG and MGTL…TMRR. Positions 288–614 constitute an FERM domain; that stretch reads WLDSSRSLME…ALPEHGIHYF (327 aa). Residues 402–507 form the PH domain; sequence VPELADYLKY…WMAACRLASR (106 aa).

This sequence belongs to the kindlin family. Interacts with pat-4/ILK. Probably forms a complex with pat-4 and pat-6. Component of an integrin containing attachment complex, composed of at least pat-2, pat-3, pat-4, pat-6, unc-52, unc-97 and unc-112. As to expression, mainly expressed in muscle cells in both embryos and adults.

It is found in the cell membrane. The protein resides in the cytoplasm. Its subcellular location is the myofibril. It localises to the sarcomere. The protein localises to the m line. Component of an integrin containing attachment complex, which is required for muscle development and maintenance. Probable regulator of cell-extracellular matrix adhesion. Required during initial muscle assembly to form dense bodies and M-lines. In Caenorhabditis elegans, this protein is Protein unc-112.